We begin with the raw amino-acid sequence, 100 residues long: Ubiquitin-related modifier 1 homolog (100 aa).

1-thioglycine is present on Gly100. Gly100 participates in a covalent cross-link: Glycyl lysine isopeptide (Gly-Lys) (interchain with K-? in acceptor proteins).

It belongs to the URM1 family. C-terminal thiocarboxylation occurs in 2 steps, it is first acyl-adenylated (-COAMP) via the hesA/moeB/thiF part of the MOCS3 homolog, then thiocarboxylated (-COSH) via the rhodanese domain of the MOCS3 homolog.

The protein resides in the cytoplasm. It functions in the pathway tRNA modification; 5-methoxycarbonylmethyl-2-thiouridine-tRNA biosynthesis. Its function is as follows. Acts as a sulfur carrier required for 2-thiolation of mcm(5)S(2)U at tRNA wobble positions of cytosolic tRNA(Lys), tRNA(Glu) and tRNA(Gln). Serves as sulfur donor in tRNA 2-thiolation reaction by being thiocarboxylated (-COSH) at its C-terminus by MOCS3. The sulfur is then transferred to tRNA to form 2-thiolation of mcm(5)S(2)U. Also acts as a ubiquitin-like protein (UBL) that is covalently conjugated via an isopeptide bond to lysine residues of target proteins. The thiocarboxylated form serves as substrate for conjugation and oxidative stress specifically induces the formation of UBL-protein conjugates. The polypeptide is Ubiquitin-related modifier 1 homolog (Oryza sativa subsp. japonica (Rice)).